The primary structure comprises 700 residues: Elongation factor G 1 (700 aa).

Positions 8–290 (ERYRNIGISA…AVIEYLPSPI (283 aa)) constitute a tr-type G domain. GTP-binding positions include 17 to 24 (AHIDAGKT), 88 to 92 (DTPGH), and 142 to 145 (NKMD).

This sequence belongs to the TRAFAC class translation factor GTPase superfamily. Classic translation factor GTPase family. EF-G/EF-2 subfamily.

It is found in the cytoplasm. In terms of biological role, catalyzes the GTP-dependent ribosomal translocation step during translation elongation. During this step, the ribosome changes from the pre-translocational (PRE) to the post-translocational (POST) state as the newly formed A-site-bound peptidyl-tRNA and P-site-bound deacylated tRNA move to the P and E sites, respectively. Catalyzes the coordinated movement of the two tRNA molecules, the mRNA and conformational changes in the ribosome. The polypeptide is Elongation factor G 1 (Bordetella avium (strain 197N)).